The following is a 222-amino-acid chain: UPF0758 protein TM_1557 (222 aa).

Residues 101 to 222 form the MPN domain; the sequence is KLDSSVKVYK…YFSFREEGEL (122 aa). Zn(2+) is bound by residues histidine 171, histidine 173, and aspartate 184. Residues 171–184 carry the JAMM motif motif; it reads HNHPSGDPTPSKED.

The protein belongs to the UPF0758 family.

This chain is UPF0758 protein TM_1557, found in Thermotoga maritima (strain ATCC 43589 / DSM 3109 / JCM 10099 / NBRC 100826 / MSB8).